A 288-amino-acid chain; its full sequence is Polyamine aminopropyltransferase (288 aa).

Residues 9-242 (SEWLDEYHQG…GLWSWTFASM (234 aa)) form the PABS domain. Q36 contributes to the S-methyl-5'-thioadenosine binding site. Positions 67 and 91 each coordinate spermidine. S-methyl-5'-thioadenosine-binding positions include E111 and 143 to 144 (NG). D162 acts as the Proton acceptor in catalysis. P169 serves as a coordination point for S-methyl-5'-thioadenosine.

This sequence belongs to the spermidine/spermine synthase family. In terms of assembly, homodimer or homotetramer.

Its subcellular location is the cytoplasm. It catalyses the reaction S-adenosyl 3-(methylsulfanyl)propylamine + putrescine = S-methyl-5'-thioadenosine + spermidine + H(+). It participates in amine and polyamine biosynthesis; spermidine biosynthesis; spermidine from putrescine: step 1/1. In terms of biological role, catalyzes the irreversible transfer of a propylamine group from the amino donor S-adenosylmethioninamine (decarboxy-AdoMet) to putrescine (1,4-diaminobutane) to yield spermidine. The chain is Polyamine aminopropyltransferase from Prochlorococcus marinus (strain NATL2A).